We begin with the raw amino-acid sequence, 642 residues long: Pentatricopeptide repeat-containing protein At3g16010 (642 aa).

14 PPR repeats span residues 125–159, 161–195, 196–230, 232–266, 267–301, 302–336, 337–371, 372–407, 408–442, 443–473, 478–512, 513–547, 548–582, and 583–617; these read DCST…TYVS, SPAV…KCKP, TSST…GDCF, DTIT…CMQP, TEKI…GCSP, TVYT…GLTP, DVVF…RCTP, TVVS…SVSP, SEFT…GFPP, CPAA…LKEN, SSRV…GSGP, DVYA…GCRA, DINS…GIKP, and DGVT…GFEY.

It belongs to the PPR family. P subfamily.

This chain is Pentatricopeptide repeat-containing protein At3g16010, found in Arabidopsis thaliana (Mouse-ear cress).